A 251-amino-acid polypeptide reads, in one-letter code: Adenosylcobinamide-GDP ribazoletransferase (251 aa).

6 consecutive transmembrane segments (helical) span residues 36 to 56 (LYPF…FVLS), 60 to 80 (VPIM…TGFL), 110 to 130 (VGAF…AGIF), 181 to 201 (EIIL…TLGI), 202 to 222 (NYLI…LKVK), and 231 to 251 (DVAG…LGII).

Belongs to the CobS family. Mg(2+) serves as cofactor.

The protein localises to the cell membrane. It carries out the reaction alpha-ribazole + adenosylcob(III)inamide-GDP = adenosylcob(III)alamin + GMP + H(+). It catalyses the reaction alpha-ribazole 5'-phosphate + adenosylcob(III)inamide-GDP = adenosylcob(III)alamin 5'-phosphate + GMP + H(+). It functions in the pathway cofactor biosynthesis; adenosylcobalamin biosynthesis; adenosylcobalamin from cob(II)yrinate a,c-diamide: step 7/7. Functionally, joins adenosylcobinamide-GDP and alpha-ribazole to generate adenosylcobalamin (Ado-cobalamin). Also synthesizes adenosylcobalamin 5'-phosphate from adenosylcobinamide-GDP and alpha-ribazole 5'-phosphate. This chain is Adenosylcobinamide-GDP ribazoletransferase, found in Clostridium perfringens (strain SM101 / Type A).